The following is a 975-amino-acid chain: Translation initiation factor IF-2 (975 aa).

The span at 48–63 (DHLRKSHGATDGDKRK) shows a compositional bias: basic and acidic residues. 2 disordered regions span residues 48-84 (DHLR…GKAR) and 98-388 (KRDD…QAPT). Over residues 104 to 115 (ETGADQAQAQTD) the composition is skewed to low complexity. A compositionally biased stretch (basic and acidic residues) spans 120–177 (AELKRREEEARREAELLEKQAQELRERQERLEREEAERRAREEAAEAERRRAEEEAAA). Residues 178–211 (KRAAAAQAEAAQQAAAAREQAQRAQSEPAEQSAQ) show a composition bias toward low complexity. Over residues 212 to 263 (DEARAAAERAAQREAAKKAEDAAREAADKARAEQEEIRKRREAAEAEARAIR) the composition is skewed to basic and acidic residues. Residues 302–330 (KPAGEAAAARPAAKKPASGAPAPAAAPAG) are compositionally biased toward low complexity. Residues 359-372 (SSGGVDRGWRGGPK) show a composition bias toward gly residues. The tr-type G domain maps to 475 to 644 (PRPPVVTVMG…LLQAEVLELK (170 aa)). Residues 484 to 491 (GHVDHGKT) are G1. 484-491 (GHVDHGKT) contributes to the GTP binding site. Residues 509–513 (GITQH) are G2. The segment at 530–533 (DTPG) is G3. GTP contacts are provided by residues 530 to 534 (DTPGH) and 584 to 587 (NKID). Positions 584 to 587 (NKID) are G4. The tract at residues 620–622 (SAK) is G5.

This sequence belongs to the TRAFAC class translation factor GTPase superfamily. Classic translation factor GTPase family. IF-2 subfamily.

Its subcellular location is the cytoplasm. One of the essential components for the initiation of protein synthesis. Protects formylmethionyl-tRNA from spontaneous hydrolysis and promotes its binding to the 30S ribosomal subunits. Also involved in the hydrolysis of GTP during the formation of the 70S ribosomal complex. The sequence is that of Translation initiation factor IF-2 from Burkholderia mallei (strain NCTC 10247).